Consider the following 320-residue polypeptide: tRNA uridine(34) hydroxylase (320 aa).

The Rhodanese domain occupies 123 to 217; the sequence is EDEDTVILDA…YGKDPETKGQ (95 aa). Catalysis depends on C177, which acts as the Cysteine persulfide intermediate.

This sequence belongs to the TrhO family.

The enzyme catalyses uridine(34) in tRNA + AH2 + O2 = 5-hydroxyuridine(34) in tRNA + A + H2O. Functionally, catalyzes oxygen-dependent 5-hydroxyuridine (ho5U) modification at position 34 in tRNAs. The chain is tRNA uridine(34) hydroxylase from Staphylococcus haemolyticus (strain JCSC1435).